We begin with the raw amino-acid sequence, 448 residues long: Endoglucanase (448 aa).

A signal peptide spans 1–34 (MFSKIKKINFFKKTFSFLIAVVMMLFTVLGTNTY). Substrate-binding positions include H70, 74 to 75 (WY), Y101, and H137. Catalysis depends on E175, which acts as the Proton donor. A substrate-binding site is contributed by Y237. Residue E263 is the Nucleophile of the active site. Substrate contacts are provided by residues 269-270 (AS), W297, and 302-304 (KSE).

The protein belongs to the glycosyl hydrolase 5 (cellulase A) family.

It catalyses the reaction Endohydrolysis of (1-&gt;4)-beta-D-glucosidic linkages in cellulose, lichenin and cereal beta-D-glucans.. This Clostridium saccharobutylicum protein is Endoglucanase (eglA).